Reading from the N-terminus, the 315-residue chain is CID domain-containing protein 1 (315 aa).

A CID domain is found at Met1–Lys135. Residues Met227–Arg273 are a coiled coil.

This Caenorhabditis elegans protein is CID domain-containing protein 1 (cids-1).